A 107-amino-acid chain; its full sequence is Phosphoribosyl-ATP pyrophosphatase (107 aa).

This sequence belongs to the PRA-PH family.

The protein localises to the cytoplasm. The enzyme catalyses 1-(5-phospho-beta-D-ribosyl)-ATP + H2O = 1-(5-phospho-beta-D-ribosyl)-5'-AMP + diphosphate + H(+). It functions in the pathway amino-acid biosynthesis; L-histidine biosynthesis; L-histidine from 5-phospho-alpha-D-ribose 1-diphosphate: step 2/9. The sequence is that of Phosphoribosyl-ATP pyrophosphatase from Rhizobium johnstonii (strain DSM 114642 / LMG 32736 / 3841) (Rhizobium leguminosarum bv. viciae).